Here is a 522-residue protein sequence, read N- to C-terminus: Lysine--tRNA ligase (522 aa).

A 'HIGH' region motif is present at residues 44 to 52 (PSGLPHIGT). A 'KMSKS' region motif is present at residues 290–294 (KISKS). K293 contributes to the ATP binding site.

The protein belongs to the class-I aminoacyl-tRNA synthetase family.

It is found in the cytoplasm. The enzyme catalyses tRNA(Lys) + L-lysine + ATP = L-lysyl-tRNA(Lys) + AMP + diphosphate. The sequence is that of Lysine--tRNA ligase from Rickettsia massiliae (strain Mtu5).